A 216-amino-acid chain; its full sequence is Peptide methionine sulfoxide reductase MsrA (216 aa).

Cys54 is a catalytic residue.

The protein belongs to the MsrA Met sulfoxide reductase family.

It catalyses the reaction L-methionyl-[protein] + [thioredoxin]-disulfide + H2O = L-methionyl-(S)-S-oxide-[protein] + [thioredoxin]-dithiol. The catalysed reaction is [thioredoxin]-disulfide + L-methionine + H2O = L-methionine (S)-S-oxide + [thioredoxin]-dithiol. Has an important function as a repair enzyme for proteins that have been inactivated by oxidation. Catalyzes the reversible oxidation-reduction of methionine sulfoxide in proteins to methionine. The polypeptide is Peptide methionine sulfoxide reductase MsrA (Xanthomonas campestris pv. campestris (strain ATCC 33913 / DSM 3586 / NCPPB 528 / LMG 568 / P 25)).